A 289-amino-acid polypeptide reads, in one-letter code: Phosphatidylglycerol--prolipoprotein diacylglyceryl transferase (289 aa).

The next 7 helical transmembrane spans lie at 17 to 37 (LAVR…ILLG), 57 to 77 (MLFY…IFFY), 89 to 109 (IFAV…VIAA), 121 to 141 (WLVV…AGRI), 174 to 194 (QLYE…IYSA), 200 to 220 (GAVS…AEFF), and 235 to 255 (ISMG…MLVW). A 1,2-diacyl-sn-glycero-3-phospho-(1'-sn-glycerol) is bound at residue Arg140.

Belongs to the Lgt family.

It localises to the cell inner membrane. The enzyme catalyses L-cysteinyl-[prolipoprotein] + a 1,2-diacyl-sn-glycero-3-phospho-(1'-sn-glycerol) = an S-1,2-diacyl-sn-glyceryl-L-cysteinyl-[prolipoprotein] + sn-glycerol 1-phosphate + H(+). Its pathway is protein modification; lipoprotein biosynthesis (diacylglyceryl transfer). Catalyzes the transfer of the diacylglyceryl group from phosphatidylglycerol to the sulfhydryl group of the N-terminal cysteine of a prolipoprotein, the first step in the formation of mature lipoproteins. This chain is Phosphatidylglycerol--prolipoprotein diacylglyceryl transferase, found in Nitrosospira multiformis (strain ATCC 25196 / NCIMB 11849 / C 71).